The primary structure comprises 288 residues: Lipoyl synthase (288 aa).

[4Fe-4S] cluster contacts are provided by C42, C47, C53, C68, C72, C75, and S280. The region spanning 54–269 (WGEGTATFMI…EKYGIELGFR (216 aa)) is the Radical SAM core domain.

Belongs to the radical SAM superfamily. Lipoyl synthase family. [4Fe-4S] cluster serves as cofactor.

The protein localises to the cytoplasm. It carries out the reaction [[Fe-S] cluster scaffold protein carrying a second [4Fe-4S](2+) cluster] + N(6)-octanoyl-L-lysyl-[protein] + 2 oxidized [2Fe-2S]-[ferredoxin] + 2 S-adenosyl-L-methionine + 4 H(+) = [[Fe-S] cluster scaffold protein] + N(6)-[(R)-dihydrolipoyl]-L-lysyl-[protein] + 4 Fe(3+) + 2 hydrogen sulfide + 2 5'-deoxyadenosine + 2 L-methionine + 2 reduced [2Fe-2S]-[ferredoxin]. It functions in the pathway protein modification; protein lipoylation via endogenous pathway; protein N(6)-(lipoyl)lysine from octanoyl-[acyl-carrier-protein]: step 2/2. Its function is as follows. Catalyzes the radical-mediated insertion of two sulfur atoms into the C-6 and C-8 positions of the octanoyl moiety bound to the lipoyl domains of lipoate-dependent enzymes, thereby converting the octanoylated domains into lipoylated derivatives. The sequence is that of Lipoyl synthase from Flavobacterium johnsoniae (strain ATCC 17061 / DSM 2064 / JCM 8514 / BCRC 14874 / CCUG 350202 / NBRC 14942 / NCIMB 11054 / UW101) (Cytophaga johnsonae).